The sequence spans 514 residues: Citrate synthase 2, peroxisomal (514 aa).

Catalysis depends on residues His-324, His-363, and Asp-419.

It belongs to the citrate synthase family. In terms of tissue distribution, widely expressed. Expressed throughout the shoot. Expressed in flower, silique, stem, cauline leaf, young leaf, mature leaf and senescent leaf.

It localises to the peroxisome. The enzyme catalyses oxaloacetate + acetyl-CoA + H2O = citrate + CoA + H(+). It functions in the pathway carbohydrate metabolism; tricarboxylic acid cycle; isocitrate from oxaloacetate: step 1/2. Its function is as follows. Peroxisomal citrate synthase required for the fatty acid respiration in seedlings, citrate being exported from peroxisomes into mitochondria during respiration of triacylglycerol (TAG). Indeed, complete respiration requires the transfer of carbon in the form of citrate from the peroxisome to the mitochondria. This is Citrate synthase 2, peroxisomal (CSY2) from Arabidopsis thaliana (Mouse-ear cress).